Reading from the N-terminus, the 58-residue chain is Small ribosomal subunit protein bS21B (58 aa).

Belongs to the bacterial ribosomal protein bS21 family.

In Nostoc sp. (strain PCC 7120 / SAG 25.82 / UTEX 2576), this protein is Small ribosomal subunit protein bS21B (rpsU2).